We begin with the raw amino-acid sequence, 268 residues long: Phosphoethanolamine/phosphocholine phosphatase (268 aa).

D32 functions as the Nucleophile in the catalytic mechanism. D32 and D34 together coordinate Mg(2+). The active-site Proton donor is the D34. Residues D43 and D123 each coordinate substrate. D203 contacts Mg(2+).

It belongs to the HAD-like hydrolase superfamily. PHOSPHO family. Mg(2+) is required as a cofactor. Expressed at sites of mineralization in bone and cartilage. Highly expressed in hypertrophic chondrocytes compared to non-chondrogenic tissues. Expressed in chondrocytes but not in heart, liver, lung, kidney, spleen, muscle, adipose tissues not duodenum. In diaphyseal cortical bone, it is expressed in the osteoid layer of the periosteum, forming surfaces of growing osteons, and newly formed osteocytes, whereas it is not expressed in the endosteum and closed osteons. In growth plate cartilage, it is limited to the early hypertrophic chondrocytes and the ossification groove of Ranvier. Highly expressed on the mineralization surfaces of the cartilage remnants and trabecular bone within the primary spongiosa. Expressed in 17-day-old embryonic calvaria, the osteoid present on the intramembranous and periosteal bone surfaces but not in soft tissues examined.

It localises to the extracellular vesicle. It catalyses the reaction phosphoethanolamine + H2O = ethanolamine + phosphate. It carries out the reaction phosphocholine + H2O = choline + phosphate. Its function is as follows. Phosphatase that has a high activity toward phosphoethanolamine (PEA) and phosphocholine (PCho). Involved in the generation of inorganic phosphate for bone mineralization. The sequence is that of Phosphoethanolamine/phosphocholine phosphatase (PHOSPHO1) from Gallus gallus (Chicken).